We begin with the raw amino-acid sequence, 545 residues long: Chaperonin GroEL (545 aa).

ATP contacts are provided by residues 30-33, Lys-51, 87-91, Gly-415, and Asp-495; these read TLGP and DGTTT.

It belongs to the chaperonin (HSP60) family. Forms a cylinder of 14 subunits composed of two heptameric rings stacked back-to-back. Interacts with the co-chaperonin GroES.

It localises to the cytoplasm. It carries out the reaction ATP + H2O + a folded polypeptide = ADP + phosphate + an unfolded polypeptide.. Its function is as follows. Together with its co-chaperonin GroES, plays an essential role in assisting protein folding. The GroEL-GroES system forms a nano-cage that allows encapsulation of the non-native substrate proteins and provides a physical environment optimized to promote and accelerate protein folding. In Shewanella baltica (strain OS185), this protein is Chaperonin GroEL.